A 922-amino-acid polypeptide reads, in one-letter code: Protein translocase subunit SecA (922 aa).

Residues glutamine 87, 105–109, and aspartate 519 each bind ATP; that span reads GEGKT. Residues 850–891 form a disordered region; sequence HASRQMRSIQGNAQHNSMGSFSGSGHGMGPTALSARSRPENA. A compositionally biased stretch (polar residues) spans 854–865; the sequence is QMRSIQGNAQHN. Zn(2+) contacts are provided by cysteine 906, cysteine 908, cysteine 917, and cysteine 918.

Belongs to the SecA family. Monomer and homodimer. Part of the essential Sec protein translocation apparatus which comprises SecA, SecYEG and auxiliary proteins SecDF. Other proteins may also be involved. It depends on Zn(2+) as a cofactor.

The protein resides in the cell inner membrane. Its subcellular location is the cytoplasm. It catalyses the reaction ATP + H2O + cellular proteinSide 1 = ADP + phosphate + cellular proteinSide 2.. In terms of biological role, part of the Sec protein translocase complex. Interacts with the SecYEG preprotein conducting channel. Has a central role in coupling the hydrolysis of ATP to the transfer of proteins into and across the cell membrane, serving as an ATP-driven molecular motor driving the stepwise translocation of polypeptide chains across the membrane. The sequence is that of Protein translocase subunit SecA from Treponema denticola (strain ATCC 35405 / DSM 14222 / CIP 103919 / JCM 8153 / KCTC 15104).